We begin with the raw amino-acid sequence, 543 residues long: Cytochrome P450 1B1 (543 aa).

Cysteine 470 contributes to the heme binding site.

Belongs to the cytochrome P450 family. The cofactor is heme. Constitutively expressed in retinal and kidney pericytes cells. Expressed in retinal endothelial cells (at protein level). Expressed in cardiac, pulmonary and aortic endothelial cells. Constitutively expressed in trabecular meshwork of the eye (at protein level).

Its subcellular location is the endoplasmic reticulum membrane. It is found in the microsome membrane. It localises to the mitochondrion. The catalysed reaction is an organic molecule + reduced [NADPH--hemoprotein reductase] + O2 = an alcohol + oxidized [NADPH--hemoprotein reductase] + H2O + H(+). It catalyses the reaction 17beta-estradiol + reduced [NADPH--hemoprotein reductase] + O2 = 2-hydroxy-17beta-estradiol + oxidized [NADPH--hemoprotein reductase] + H2O + H(+). The enzyme catalyses 17beta-estradiol + reduced [NADPH--hemoprotein reductase] + O2 = 4-hydroxy-17beta-estradiol + oxidized [NADPH--hemoprotein reductase] + H2O + H(+). It carries out the reaction estrone + reduced [NADPH--hemoprotein reductase] + O2 = 2-hydroxyestrone + oxidized [NADPH--hemoprotein reductase] + H2O + H(+). The catalysed reaction is estrone + reduced [NADPH--hemoprotein reductase] + O2 = 4-hydroxyestrone + oxidized [NADPH--hemoprotein reductase] + H2O + H(+). It catalyses the reaction testosterone + reduced [NADPH--hemoprotein reductase] + O2 = 6beta,17beta-dihydroxyandrost-4-en-3-one + oxidized [NADPH--hemoprotein reductase] + H2O + H(+). The enzyme catalyses progesterone + reduced [NADPH--hemoprotein reductase] + O2 = 6beta-hydroxyprogesterone + oxidized [NADPH--hemoprotein reductase] + H2O + H(+). It carries out the reaction progesterone + reduced [NADPH--hemoprotein reductase] + O2 = 16alpha-hydroxyprogesterone + oxidized [NADPH--hemoprotein reductase] + H2O + H(+). The catalysed reaction is all-trans-retinol + reduced [NADPH--hemoprotein reductase] + O2 = all-trans-retinal + oxidized [NADPH--hemoprotein reductase] + 2 H2O + H(+). It catalyses the reaction all-trans-retinal + reduced [NADPH--hemoprotein reductase] + O2 = all-trans-retinoate + oxidized [NADPH--hemoprotein reductase] + H2O + 2 H(+). The enzyme catalyses (5Z,8Z,11Z,14Z)-eicosatetraenoate + reduced [NADPH--hemoprotein reductase] + O2 = (8R,9S)-epoxy-(5Z,11Z,14Z)-eicosatrienoate + oxidized [NADPH--hemoprotein reductase] + H2O + H(+). It carries out the reaction (5Z,8Z,11Z,14Z)-eicosatetraenoate + reduced [NADPH--hemoprotein reductase] + O2 = (11R,12S)-epoxy-(5Z,8Z,14Z)-eicosatrienoate + oxidized [NADPH--hemoprotein reductase] + H2O + H(+). The catalysed reaction is (5Z,8Z,11Z,14Z)-eicosatetraenoate + reduced [NADPH--hemoprotein reductase] + O2 = (11S,12R)-epoxy-(5Z,8Z,14Z)-eicosatrienoate + oxidized [NADPH--hemoprotein reductase] + H2O + H(+). It catalyses the reaction (5Z,8Z,11Z,14Z)-eicosatetraenoate + reduced [NADPH--hemoprotein reductase] + O2 = (14R,15S)-epoxy-(5Z,8Z,11Z)-eicosatrienoate + oxidized [NADPH--hemoprotein reductase] + H2O + H(+). The enzyme catalyses (5S)-hydroperoxy-(6E,8Z,11Z,14Z)-eicosatetraenoate = 5-oxo-(6E,8Z,11Z,14Z)-eicosatetraenoate + H2O. It carries out the reaction (12S)-hydroperoxy-(5Z,8Z,10E,14Z)-eicosatetraenoate = 12-oxo-(5Z,8Z,10E,14Z)-eicosatetraenoate + H2O. The catalysed reaction is (13S)-hydroperoxy-(9Z,11E)-octadecadienoate = 13-oxo-(9Z,11E)-octadecadienoate + H2O. It catalyses the reaction (15S)-hydroperoxy-(5Z,8Z,11Z,13E)-eicosatetraenoate = 15-oxo-(5Z,8Z,11Z,13E)-eicosatetraenoate + H2O. The protein operates within steroid hormone biosynthesis. Its pathway is cofactor metabolism; retinol metabolism. It functions in the pathway lipid metabolism; arachidonate metabolism. Enzyme activity is increased by cytochrome b5. Enzyme activity is increased by liposomes containing anionic phospholipids, phosphatidic acid and cardiolipin. Inhibited by naringenin with an IC(50) of 5 uM. A cytochrome P450 monooxygenase involved in the metabolism of various endogenous substrates, including fatty acids, steroid hormones and vitamins. Mechanistically, uses molecular oxygen inserting one oxygen atom into a substrate, and reducing the second into a water molecule, with two electrons provided by NADPH via cytochrome P450 reductase (NADPH--hemoprotein reductase). Exhibits catalytic activity for the formation of hydroxyestrogens from 17beta-estradiol (E2), namely 2- and 4-hydroxy E2. Metabolizes testosterone and progesterone to B or D ring hydroxylated metabolites. May act as a major enzyme for all-trans retinoic acid biosynthesis in extrahepatic tissues. Catalyzes two successive oxidative transformation of all-trans retinol to all-trans retinal and then to the active form all-trans retinoic acid. Catalyzes the epoxidation of double bonds of certain PUFA. Converts arachidonic acid toward epoxyeicosatrienoic acid (EpETrE) regioisomers, 8,9-, 11,12-, and 14,15- EpETrE, that function as lipid mediators in the vascular system. Additionally, displays dehydratase activity toward oxygenated eicosanoids hydroperoxyeicosatetraenoates (HpETEs). This activity is independent of cytochrome P450 reductase, NADPH, and O2. Also involved in the oxidative metabolism of xenobiotics, particularly converting polycyclic aromatic hydrocarbons and heterocyclic aryl amines procarcinogens to DNA-damaging products. Plays an important role in retinal vascular development. Under ambient/hyperoxic O2 conditions, promotes angiogenesis and capillary morphogenesis of retinal endothelial cells and pericytes, likely by metabolizing the oxygenated products symptomatic of oxidative stress. Also, contributes to oxidative homeostasis and ultrastructural organization and function of trabecular meshwork tissue through modulation of POSTN expression. This is Cytochrome P450 1B1 from Mus musculus (Mouse).